The following is a 563-amino-acid chain: Developmental regulatory protein wetA (563 aa).

Composition is skewed to polar residues over residues E54 to S69 and H160 to Q175. Disordered stretches follow at residues E54–P81, A112–K176, S272–Q318, P334–T356, P430–G494, and G516–R538. The segment covering S272–D305 has biased composition (low complexity). A compositionally biased stretch (polar residues) spans P430–L441.

This sequence belongs to the wetA family.

In terms of biological role, brlA, abaA and wetA are pivotal regulators of conidiophore development and conidium maturation. They act individually and together to regulate their own expression and that of numerous other sporulation-specific genes. The polypeptide is Developmental regulatory protein wetA (Aspergillus oryzae (strain ATCC 42149 / RIB 40) (Yellow koji mold)).